An 836-amino-acid chain; its full sequence is Envelope glycoprotein gp160 (836 aa).

The first 21 residues, 1-21 (MGMQSGWPFFCLLISLTIGSD), serve as a signal peptide directing secretion. Residues 22–656 (PHWVTVYYGV…ITKWLWYIKI (635 aa)) are Extracellular-facing. A disulfide bridge links C43 with C63. N-linked (GlcNAc...) asparagine; by host glycosylation is found at N77, N121, N130, N134, N146, N150, N180, N189, N224, N228, N233, N254, N276, N282, N288, N318, N328, N340, and N341. Cystine bridges form between C108–C197, C115–C188, C120–C147, C210–C239, and C220–C231. The segment at 120-146 (CNNSNGNSAGNSTTNRTEDLEDRQMKN) is V1. The tract at residues 147–188 (CSFNITTEIRDRKKQVYSLFYVEDVVPIKDGTDNNTYRLINC) is V2. The tract at residues 283 to 316 (CTRPGNNTGGQVQIGPAMTFYNIEKIVGDVRQAY) is V3. A disulfide bridge connects residues C283 and C317. Residues 349 to 359 (KNGGDLEVTHL) are CD4-binding loop. Intrachain disulfides connect C363/C418 and C370/C391. The interval 370–391 (CNTSRLFNESENKTNKTIILPC) is V4. 6 N-linked (GlcNAc...) asparagine; by host glycosylation sites follow: N371, N377, N381, N384, N415, and N435. Residues 434-441 (GNKTVYPS) form a V5 region. The tract at residues 482-503 (AAFGLGALFLGFLGAAGSTMGA) is fusion peptide. Residues 545–563 (KQLRAKVLAIERYLRDQQI) form an immunosuppression region. A disulfide bridge links C569 with C575. N-linked (GlcNAc...) asparagine; by host glycans are attached at residues N582, N588, N597, and N609. The stretch at 605 to 639 (RKVRNYSGVIFDLIEQAQEQQNTNEKALLELDQWA) forms a coiled coil. The tract at residues 634 to 655 (ELDQWASLWNWFDITKWLWYIK) is MPER; binding to GalCer. Residues 657–677 (AIMVVAGIIGIRIISAIITII) traverse the membrane as a helical segment. At 678 to 836 (ARVRQGYSPL…IRQGLERALL (159 aa)) the chain is on the cytoplasmic side. Positions 684 to 687 (YSPL) match the YXXL motif; contains endocytosis signal motif. Positions 696–715 (AARGPDRPEETEEGVGGQDR) are disordered. The Di-leucine internalization motif signature appears at 835–836 (LL).

This sequence belongs to the HIV-1 env protein family. In terms of assembly, the mature envelope protein (Env) consists of a homotrimer of non-covalently associated gp120-gp41 heterodimers. The resulting complex protrudes from the virus surface as a spike. There seems to be as few as 10 spikes on the average virion. Interacts with host CD4, CCR5 and CXCR4. Gp120 also interacts with the C-type lectins CD209/DC-SIGN and CLEC4M/DC-SIGNR (collectively referred to as DC-SIGN(R)). Gp120 and gp41 interact with GalCer. Gp120 interacts with host ITGA4/ITGB7 complex; on CD4+ T-cells, this interaction results in rapid activation of integrin ITGAL/LFA-1, which facilitates efficient cell-to-cell spreading of HIV-1. Gp120 interacts with cell-associated heparan sulfate; this interaction increases virus infectivity on permissive cells and may be involved in infection of CD4- cells. The mature envelope protein (Env) consists of a homotrimer of non-covalently associated gp120-gp41 heterodimers. The resulting complex protrudes from the virus surface as a spike. There seems to be as few as 10 spikes on the average virion. Post-translationally, highly glycosylated by host. The high number of glycan on the protein is reffered to as 'glycan shield' because it contributes to hide protein sequence from adaptive immune system. In terms of processing, palmitoylation of the transmembrane protein and of Env polyprotein (prior to its proteolytic cleavage) is essential for their association with host cell membrane lipid rafts. Palmitoylation is therefore required for envelope trafficking to classical lipid rafts, but not for viral replication. Specific enzymatic cleavages in vivo yield mature proteins. Envelope glycoproteins are synthesized as an inactive precursor that is heavily N-glycosylated and processed likely by host cell furin in the Golgi to yield the mature SU and TM proteins. The cleavage site between SU and TM requires the minimal sequence [KR]-X-[KR]-R. About 2 of the 9 disulfide bonds of gp41 are reduced by P4HB/PDI, following binding to CD4 receptor.

The protein resides in the virion membrane. It localises to the host cell membrane. It is found in the host endosome membrane. Functionally, oligomerizes in the host endoplasmic reticulum into predominantly trimers. In a second time, gp160 transits in the host Golgi, where glycosylation is completed. The precursor is then proteolytically cleaved in the trans-Golgi and thereby activated by cellular furin or furin-like proteases to produce gp120 and gp41. In terms of biological role, attaches the virus to the host lymphoid cell by binding to the primary receptor CD4. This interaction induces a structural rearrangement creating a high affinity binding site for a chemokine coreceptor like CXCR4 and/or CCR5. Acts as a ligand for CD209/DC-SIGN and CLEC4M/DC-SIGNR, which are respectively found on dendritic cells (DCs), and on endothelial cells of liver sinusoids and lymph node sinuses. These interactions allow capture of viral particles at mucosal surfaces by these cells and subsequent transmission to permissive cells. HIV subverts the migration properties of dendritic cells to gain access to CD4+ T-cells in lymph nodes. Virus transmission to permissive T-cells occurs either in trans (without DCs infection, through viral capture and transmission), or in cis (following DCs productive infection, through the usual CD4-gp120 interaction), thereby inducing a robust infection. In trans infection, bound virions remain infectious over days and it is proposed that they are not degraded, but protected in non-lysosomal acidic organelles within the DCs close to the cell membrane thus contributing to the viral infectious potential during DCs' migration from the periphery to the lymphoid tissues. On arrival at lymphoid tissues, intact virions recycle back to DCs' cell surface allowing virus transmission to CD4+ T-cells. Its function is as follows. Acts as a class I viral fusion protein. Under the current model, the protein has at least 3 conformational states: pre-fusion native state, pre-hairpin intermediate state, and post-fusion hairpin state. During fusion of viral and target intracellular membranes, the coiled coil regions (heptad repeats) assume a trimer-of-hairpins structure, positioning the fusion peptide in close proximity to the C-terminal region of the ectodomain. The formation of this structure appears to drive apposition and subsequent fusion of viral and target cell membranes. Complete fusion occurs in host cell endosomes and is dynamin-dependent, however some lipid transfer might occur at the plasma membrane. The virus undergoes clathrin-dependent internalization long before endosomal fusion, thus minimizing the surface exposure of conserved viral epitopes during fusion and reducing the efficacy of inhibitors targeting these epitopes. Membranes fusion leads to delivery of the nucleocapsid into the cytoplasm. The polypeptide is Envelope glycoprotein gp160 (Human immunodeficiency virus type 1 group N (isolate YBF106) (HIV-1)).